The chain runs to 2024 residues: Pericentriolar material 1 protein (2024 aa).

Residues 1-92 (MATGGGPFED…FPHSRYMSQM (92 aa)) form a disordered region. Position 2 is an N-acetylalanine (Ala-2). The mediates interaction with DZIP1 stretch occupies residues 2 to 1460 (ATGGGPFEDG…TWIASNSELT (1459 aa)). Over residues 43 to 61 (RSSEKNKKKFGVESDKRVT) the composition is skewed to basic and acidic residues. Phosphoserine is present on residues Ser-65, Ser-68, Ser-69, Ser-93, Ser-110, Ser-116, and Ser-119. Residues 111 to 163 (DLDQRSIGSDSQGRATAANNKRQLSENRKPFNFLPMQINTNKSKDASTNPPNR) are disordered. Polar residues-rich tracts occupy residues 116 to 132 (SIGSDSQGRATAANNKR) and 147 to 163 (QINTNKSKDASTNPPNR). Asn-159 carries the phosphoserine; in variant Ser-159 modification. Residues 218 to 301 (KASSMREDLV…QLRALQGRQA (84 aa)) adopt a coiled-coil conformation. The segment at 354–392 (RDSQPPAVPDNRRQAESLSLTREVSQSRKPSASERLPDE) is disordered. A compositionally biased stretch (polar residues) spans 369 to 383 (ESLSLTREVSQSRKP). Ser-370 bears the Phosphoserine mark. Ser-372 carries the phosphoserine; by PLK4 modification. At Ser-384 the chain carries Phosphoserine. Residue Lys-399 is modified to N6-acetyllysine. Residues 400–424 (MRVLQEKKQKMDKLLGELHTLRDQH) adopt a coiled-coil conformation. Disordered stretches follow at residues 421–492 (RDQH…KLQK) and 523–548 (ENRKDEETEESEYDSEHENSEPVTNI). Composition is skewed to polar residues over residues 425-445 (LNNSSSSPQRSVDQRSTSAPS) and 456-477 (GESNSLTSSVPYPTASLVSQNE). Residues 487–543 (SEKLQKLNEVRKRLNELRELVHYYEQTSDMMTDAVNENRKDEETEESEYDSEHENSE) adopt a coiled-coil conformation. A Phosphoserine modification is found at Ser-588. 2 disordered regions span residues 614-652 (HVAQGEDDEEEEEEAEEEGVSGASLSSHRSSLVDEHPED) and 699-726 (FYPAEEDTKQNSNNTRGNANKTQKDTGV). Residues 618-632 (GEDDEEEEEEAEEEG) show a composition bias toward acidic residues. Low complexity predominate over residues 634-643 (SGASLSSHRS). Ser-643 carries the phosphoserine modification. Positions 651–682 (EDAEFEQKINRLMAAKQKLRQLQDLVAMVQDD) form a coiled coil. Polar residues predominate over residues 708–719 (QNSNNTRGNANK). 2 coiled-coil regions span residues 726–769 (VNEK…LQTA) and 824–858 (SEMRRHEMLREELRQRRKQLEALMAEHQRRQGLAE). Position 859 is a phosphothreonine (Thr-859). Residues Ser-861, Ser-866, Ser-869, and Ser-872 each carry the phosphoserine modification. Residue Thr-877 is modified to Phosphothreonine. Residues 915–947 (TDEEEEEEQDASSNDNFSVCPSNSVNHNSYNGK) are disordered. Residues 925–946 (ASSNDNFSVCPSNSVNHNSYNG) are compositionally biased toward polar residues. Ser-960, Ser-977, Ser-988, and Ser-991 each carry phosphoserine. Positions 1063–1089 (TQLTWQQNNVQRLKQMLNELMRQQNQH) form a coiled coil. Disordered stretches follow at residues 1085–1109 (QQNQHPEKPGGKERGSSASHPPSPS) and 1152–1211 (FSQN…RTPW). Basic and acidic residues predominate over residues 1089 to 1099 (HPEKPGGKERG). Polar residues predominate over residues 1152–1173 (FSQNISTPSEQQQPLAQNSSGK). 2 positions are modified to phosphoserine: Ser-1185 and Ser-1188. The span at 1192-1201 (EKPRNKKLPE) shows a compositional bias: basic and acidic residues. Residues Ser-1229 and Ser-1231 each carry the phosphoserine modification. Residues 1232-1246 (VEKSTSSNRKNQLDT) show a composition bias toward polar residues. The segment at 1232–1342 (VEKSTSSNRK…RHSAQTEEPV (111 aa)) is disordered. Phosphoserine occurs at positions 1257, 1260, 1262, and 1263. Positions 1279–1799 (TRKASAQASL…TQALTNYGSG (521 aa)) are interaction with HAP1. Residues 1296–1313 (KSKSKKRNSTQLKSRVKN) show a composition bias toward basic residues. 2 positions are modified to phosphoserine: Ser-1318 and Ser-1320. Phosphothreonine is present on Thr-1468. Residues 1515–1539 (IHLDQALARMREYERMKTEAESNSN) are a coiled coil. A phosphoserine mark is found at Ser-1573, Ser-1697, Ser-1730, Ser-1765, Ser-1768, Ser-1776, and Ser-1782. Disordered stretches follow at residues 1725-1868 (LEDH…NNCP) and 1880-1944 (EQPL…PVLV). The span at 1768–1777 (SDQEEDEESE) shows a compositional bias: acidic residues. The span at 1783–1797 (INLSKAETQALTNYG) shows a compositional bias: polar residues. Acidic residues predominate over residues 1799–1815 (GEDENEDEEMEEFEEGP). Polar residues predominate over residues 1818-1827 (VQTSLQANTE). Basic and acidic residues predominate over residues 1835 to 1860 (DEQVLQRDFKKTAESKNVPLEREATS). Over residues 1905 to 1916 (PLRLPEMEPLVP) the composition is skewed to low complexity. The segment at 1913–2024 (PLVPRVKEVK…EPETVGAQSI (112 aa)) is interaction with BBS4. The span at 1924 to 1933 (AQETPESSLA) shows a compositional bias: polar residues. Ser-1958 and Ser-1977 each carry phosphoserine. Residues 2005–2024 (ELAGNSETLKEPETVGAQSI) are disordered.

The protein belongs to the PCM1 family. Self-associates. Interacts with C2CD3. Interacts with BBS4, BBS8, CETN3, HAP1, NDE1, NDEL1, MAP1LC3B, GABARAPAL2, and GABARAP. Interacts with CEP131; the interaction increases in response to ultraviolet light (UV) radiation. Associates with microtubule; association to microtubule is reduced in response to cellular stress, such as ultraviolet light (UV) radiation or heat shock, in a process that requires p38 MAP kinase signaling. Interacts with CFAP263. Interacts with SSX2IP. Interacts with CCDC13. Interacts with CEP290. Interacts with PARD6A. Interacts with KIAA0753/OFIP, CEP20/FOR20 and OFD1; the interaction with CEP20/FOR20 and OFD1 may be mediated by KIAA0753/OFIP. Interacts with CCDC66. Interacts with CCDC61. Interacts with DZIP1; localizes DZIP1 and the associated BBSome to centriolar satellite. Interacts with CSTPP1, TTLL1, TPGS1 and LRRC49. Interacts with CFAP53. In terms of processing, ubiquitinated. Undergoes monoubiquitination catalyzed by the E3 ubiquitin-protein ligase MIB1 in proliferating cells, preventing cilia formation. Monoubiquitination by MIB1 is inhibited in response to cellular stress, such as ultraviolet light (UV) radiation or heat shock, resulting in cilia formation initiation. Variant Ser-159 is phosphorylated. Post-translationally, phosphorylated on multiple serine and threonine residues by DYRK3 during the G2-to-M transition, after the nuclear-envelope breakdown. Phosphorylation by DYRK3 promotes disassembly of pericentriolar material. Phosphorylation at Ser-372 mediated by PLK4 is required to maintain the integrity of centriolar satellites. Expressed in blood, bone marrow, breast, lymph node, ovary and thyroid.

The protein resides in the cytoplasm. Its subcellular location is the cytoskeleton. The protein localises to the microtubule organizing center. It localises to the centrosome. It is found in the cytoplasmic granule. The protein resides in the centriolar satellite. Its subcellular location is the cilium basal body. Functionally, required for centrosome assembly and function. Essential for the correct localization of several centrosomal proteins including CEP250, CETN3, PCNT and NEK2. Required to anchor microtubules to the centrosome. Also involved in cilium biogenesis by recruiting the BBSome, a ciliary protein complex involved in cilium biogenesis, to the centriolar satellites. Recruits the tubulin polyglutamylase complex (TPGC) to centriolar satellites. The protein is Pericentriolar material 1 protein of Homo sapiens (Human).